The chain runs to 151 residues: Macrodomain Ter protein (151 aa).

Belongs to the MatP family. In terms of assembly, homodimer.

Its subcellular location is the cytoplasm. Required for spatial organization of the terminus region of the chromosome (Ter macrodomain) during the cell cycle. Prevents early segregation of duplicated Ter macrodomains during cell division. Binds specifically to matS, which is a 13 bp signature motif repeated within the Ter macrodomain. This Vibrio atlanticus (strain LGP32) (Vibrio splendidus (strain Mel32)) protein is Macrodomain Ter protein.